The sequence spans 373 residues: Bilirubin reductase (373 aa).

Gln-92 contributes to the FMN binding site. Arg-168 (proton donor) is an active-site residue. Lys-215 is an FMN binding site. Residues Cys-344, Cys-347, Cys-351, and Cys-363 each coordinate [4Fe-4S] cluster.

The protein belongs to the NADH:flavin oxidoreductase/NADH oxidase family. Requires FMN as cofactor. [4Fe-4S] cluster serves as cofactor.

It catalyses the reaction urobilinogen + 4 A = (4Z,15Z)-bilirubin IXalpha + 4 AH2. The enzyme catalyses urobilinogen + 2 A = (4Z,15Z)-mesobilirubin IXalpha + 2 AH2. The protein operates within porphyrin-containing compound metabolism; protoheme degradation. Functionally, bilirubin reductase that catalyzes reduction of mesobilirubin and/or bilirubin to urobilinogen, a key step during heme degradation. Cooperates with BilS, which is probably involved in electron transfer for BilR. Urobilinogen then spontaneously degrades into urobilin, which gives urine its distinctive yellow color. The sequence is that of Bilirubin reductase from Clostridium symbiosum (strain WAL-14163).